The following is a 586-amino-acid chain: Pectinesterase 1 (586 aa).

Residues 1–49 (MDSVNSFKGYGKVDEAQDLALKKKTRKRLLLLSISVVVLIAVIIAAVVA) form the signal peptide. N-linked (GlcNAc...) asparagine glycans are attached at residues Asn-57, Asn-97, Asn-154, Asn-201, and Asn-207. The RRLM cleavage motif motif lies at 250 to 253 (RRLM). An RRLL cleavage motif motif is present at residues 269–272 (RRLL). 2 residues coordinate substrate: Thr-355 and Gln-385. Asp-408 (proton donor) is an active-site residue. Cysteines 422 and 442 form a disulfide. The active-site Nucleophile is Asp-429. Asn-466 carries N-linked (GlcNAc...) asparagine glycosylation. Substrate-binding residues include Arg-492 and Trp-494.

This sequence in the N-terminal section; belongs to the PMEI family. It in the C-terminal section; belongs to the pectinesterase family. In terms of assembly, interacts with SBT6.1. In terms of tissue distribution, expressed in siliques.

The protein resides in the secreted. It is found in the cell wall. Its subcellular location is the golgi apparatus membrane. It catalyses the reaction [(1-&gt;4)-alpha-D-galacturonosyl methyl ester](n) + n H2O = [(1-&gt;4)-alpha-D-galacturonosyl](n) + n methanol + n H(+). It participates in glycan metabolism; pectin degradation; 2-dehydro-3-deoxy-D-gluconate from pectin: step 1/5. Its function is as follows. Acts in the modification of cell walls via demethylesterification of cell wall pectin. Demethylates protein phosphatase 2A (PP2A) that have been reversibly carboxymethylated by LCMT1. Acts as a negative regulators of genes involved in salt stress response. This chain is Pectinesterase 1 (PME1), found in Arabidopsis thaliana (Mouse-ear cress).